Consider the following 249-residue polypeptide: Ribonuclease 3 (249 aa).

The region spanning 21-149 (VDHQPLIDAL…LLGAIYLAHG (129 aa)) is the RNase III domain. Glu-62 serves as a coordination point for Mg(2+). Residue Asp-66 is part of the active site. Mg(2+) is bound by residues Asp-135 and Glu-138. Residue Glu-138 is part of the active site. The DRBM domain occupies 176–244 (DWKTTLQERL…AHKAVGFLQD (69 aa)).

It belongs to the ribonuclease III family. As to quaternary structure, homodimer. Mg(2+) serves as cofactor.

It is found in the cytoplasm. The enzyme catalyses Endonucleolytic cleavage to 5'-phosphomonoester.. Functionally, digests double-stranded RNA. Involved in the processing of primary rRNA transcript to yield the immediate precursors to the large and small rRNAs (23S and 16S). Processes some mRNAs, and tRNAs when they are encoded in the rRNA operon. Processes pre-crRNA and tracrRNA of type II CRISPR loci if present in the organism. This chain is Ribonuclease 3, found in Corynebacterium diphtheriae (strain ATCC 700971 / NCTC 13129 / Biotype gravis).